Reading from the N-terminus, the 208-residue chain is MAGNETIETFLDGLASSAPTPGGGGAAAISGAMGAALVSMVCNLTIGKKKYVEVEADLKQVLEKSEGLRRTLTGMIADDVEAFDAVMGAYGLPKNTDEEKAARAAKIQEALKTATDVPLACCRVCREVIDLAEIVAEKGNLNVISDAGVAVLSAYAGLRSAALNVYVNAKGLDDRAFAEERLKELEGLLAEAGALNERIYETVKSKVN.

Residues 25–46 traverse the membrane as a helical segment; it reads GAAAISGAMGAALVSMVCNLTI.

This sequence belongs to the cyclodeaminase/cyclohydrolase family. Homodimer.

The protein localises to the membrane. It catalyses the reaction (6R)-5,10-methenyltetrahydrofolate + H2O = (6R)-10-formyltetrahydrofolate + H(+). The protein operates within one-carbon metabolism; formaldehyde assimilation via serine pathway. Functionally, required for both C1 and C2 metabolism. This is Methenyltetrahydrofolate cyclohydrolase (fchA) from Methylorubrum extorquens (strain ATCC 14718 / DSM 1338 / JCM 2805 / NCIMB 9133 / AM1) (Methylobacterium extorquens).